The sequence spans 124 residues: Large ribosomal subunit protein bL12 (124 aa).

It belongs to the bacterial ribosomal protein bL12 family. In terms of assembly, homodimer. Part of the ribosomal stalk of the 50S ribosomal subunit. Forms a multimeric L10(L12)X complex, where L10 forms an elongated spine to which 2 to 4 L12 dimers bind in a sequential fashion. Binds GTP-bound translation factors.

Forms part of the ribosomal stalk which helps the ribosome interact with GTP-bound translation factors. Is thus essential for accurate translation. This Burkholderia lata (strain ATCC 17760 / DSM 23089 / LMG 22485 / NCIMB 9086 / R18194 / 383) protein is Large ribosomal subunit protein bL12.